The chain runs to 569 residues: 3-(3-hydroxy-phenyl)propionate/3-hydroxycinnamic acid hydroxylase (569 aa).

FAD-binding positions include 8–37 (DVVIVGAGPAGLTLANILGLEGVRVLVVDE) and 273–283 (FREGRLMLAGD).

This sequence belongs to the PheA/TfdB FAD monooxygenase family. FAD is required as a cofactor.

The catalysed reaction is 3-(3-hydroxyphenyl)propanoate + NADH + O2 + H(+) = 3-(2,3-dihydroxyphenyl)propanoate + NAD(+) + H2O. The enzyme catalyses (2E)-3-(3-hydroxyphenyl)prop-2-enoate + NADH + O2 + H(+) = (2E)-3-(2,3-dihydroxyphenyl)prop-2-enoate + NAD(+) + H2O. It functions in the pathway aromatic compound metabolism; 3-phenylpropanoate degradation. Its function is as follows. Catalyzes the insertion of one atom of molecular oxygen into position 2 of the phenyl ring of 3-(3-hydroxyphenyl)propionate (3-HPP) and hydroxycinnamic acid (3HCI). This is 3-(3-hydroxy-phenyl)propionate/3-hydroxycinnamic acid hydroxylase from Mycolicibacterium gilvum (strain PYR-GCK) (Mycobacterium gilvum (strain PYR-GCK)).